We begin with the raw amino-acid sequence, 545 residues long: Glucose-6-phosphate isomerase (545 aa).

The active-site Proton donor is the E351. Residues H382 and K510 contribute to the active site.

Belongs to the GPI family.

The protein resides in the cytoplasm. It catalyses the reaction alpha-D-glucose 6-phosphate = beta-D-fructose 6-phosphate. Its pathway is carbohydrate biosynthesis; gluconeogenesis. It functions in the pathway carbohydrate degradation; glycolysis; D-glyceraldehyde 3-phosphate and glycerone phosphate from D-glucose: step 2/4. Functionally, catalyzes the reversible isomerization of glucose-6-phosphate to fructose-6-phosphate. The chain is Glucose-6-phosphate isomerase from Helicobacter pylori (strain Shi470).